The primary structure comprises 515 residues: GMP synthase [glutamine-hydrolyzing] (515 aa).

Positions 10–200 (TIIVLDFGSQ…VFGVCGCSEG (191 aa)) constitute a Glutamine amidotransferase type-1 domain. The active-site Nucleophile is the C87. Residues H174 and E176 contribute to the active site. The GMPS ATP-PPase domain maps to 201 to 390 (WNMENFIEVE…LGIPDEIVWR (190 aa)). Position 228–234 (228–234 (SGGVDSS)) interacts with ATP.

In terms of assembly, homodimer.

It catalyses the reaction XMP + L-glutamine + ATP + H2O = GMP + L-glutamate + AMP + diphosphate + 2 H(+). The protein operates within purine metabolism; GMP biosynthesis; GMP from XMP (L-Gln route): step 1/1. Functionally, catalyzes the synthesis of GMP from XMP. This is GMP synthase [glutamine-hydrolyzing] from Bacillus thuringiensis subsp. konkukian (strain 97-27).